Here is a 139-residue protein sequence, read N- to C-terminus: Actin-depolymerizing factor 1 (139 aa).

The ADF-H domain maps to 5 to 139 (ASGMAVHDDC…DLDVFRSRAN (135 aa)). Serine 6 is subject to Phosphoserine; by CPK3.

Belongs to the actin-binding proteins ADF family. Interacts with the 14-3-3-like protein GRF6/AFT1. In terms of processing, phosphorylation at Ser-6 by CPK3/CDPK6 inhibits actin-depolimerizing activity. In terms of tissue distribution, expressed in vascular tissues of all organs.

The protein localises to the cytoplasm. It localises to the cytoskeleton. In terms of biological role, actin-depolymerizing protein. Stimulates F-actin depolymerization. Involved in plant development, cell organ expansion and flowering by controlling breakdown of thick actin cables. Severs actin filaments or bundles and promotes actin cytoskeleton disassembly. Binds monomeric actin (G-actin) with a marked preference for the ADP-loaded form and inhibits the rate of nucleotide exchange on G-actin. The sequence is that of Actin-depolymerizing factor 1 (ADF1) from Arabidopsis thaliana (Mouse-ear cress).